A 110-amino-acid polypeptide reads, in one-letter code: Histone H2A.1 (110 aa).

It belongs to the histone H2A family. In terms of assembly, the nucleosome is a histone octamer containing two molecules each of H2A, H2B, H3 and H4 assembled in one H3-H4 heterotetramer and two H2A-H2B heterodimers. The octamer wraps approximately 147 bp of DNA. In terms of tissue distribution, expressed in the generative cell within the bicellular pollen. Not detected in other reproductive or vegetative tissues.

It is found in the nucleus. The protein resides in the chromosome. In terms of biological role, core component of nucleosome. Nucleosomes wrap and compact DNA into chromatin, limiting DNA accessibility to the cellular machineries which require DNA as a template. Histones thereby play a central role in transcription regulation, DNA repair, DNA replication and chromosomal stability. DNA accessibility is regulated via a complex set of post-translational modifications of histones, also called histone code, and nucleosome remodeling. This Lilium longiflorum (Trumpet lily) protein is Histone H2A.1 (gcH2A).